Here is a 907-residue protein sequence, read N- to C-terminus: Whirlin (907 aa).

In terms of domain architecture, PDZ 1 spans 140-223 (LVSLRRAKAH…LVLSVYSAGR (84 aa)). The interval 243-264 (SISPPSGLPQPHGGALRQQEGD) is disordered. The 83-residue stretch at 279-361 (KVNLVLGDGR…LILTVKDVGR (83 aa)) folds into the PDZ 2 domain. Disordered regions lie at residues 502 to 540 (SMKA…TVSS), 565 to 663 (SVDD…SSKR), 684 to 717 (QSPP…QTGT), and 742 to 815 (PQTR…PTST). Low complexity predominate over residues 521-540 (SYSDTGSSTGSHGTSTTVSS). The segment covering 609-626 (PPSSMPSCSGTVFSAPQN) has biased composition (polar residues). Positions 628 to 642 (SPPAGTAPTPGTSSA) are enriched in low complexity. S685 is subject to Phosphoserine. Residues 743-762 (QTRTASTLSQLSDSGQTLSE) are compositionally biased toward polar residues. The segment covering 789-800 (SSKELPRNERPT) has biased composition (basic and acidic residues). Positions 816–899 (LVRVKKSAAT…TKDRDYIDFL (84 aa)) constitute a PDZ 3 domain.

In terms of assembly, forms homooligomers. Interacts (via C-terminal PDZ domain) with MYO15A; this interaction is necessary for localization of WHRN to stereocilia tips. Interacts (via C-terminal PDZ domain) with MPP1/p55. Interacts with LRRC4C/NGL1. Interacts with MYO7A. Interacts with RPGR. Interacts with EPS8. Interacts with CASK. Interacts with CIB2. Component of USH2 complex, composed of ADGRV1, PDZD7, USH2A and WHRN. Interacts (via PDZ domains) with PDZD7; the interaction is direct. Interacts (via N-terminal PDZ domain) with USH2A (via cytoplasmic region). Interacts with ADGRV1/MASS1 (via cytoplasmic region).

It localises to the cytoplasm. Its subcellular location is the cell projection. The protein resides in the stereocilium. It is found in the growth cone. The protein localises to the photoreceptor inner segment. It localises to the synapse. Its function is as follows. Involved in hearing and vision as member of the USH2 complex. Necessary for elongation and maintenance of inner and outer hair cell stereocilia in the organ of Corti in the inner ear. Involved in the maintenance of the hair bundle ankle region, which connects stereocilia in cochlear hair cells of the inner ear. In retina photoreceptors, required for the maintenance of periciliary membrane complex that seems to play a role in regulating intracellular protein transport. The chain is Whirlin from Homo sapiens (Human).